A 309-amino-acid polypeptide reads, in one-letter code: 2-oxoacid:ferredoxin oxidoreductase 2, subunit beta (309 aa).

[4Fe-4S] cluster-binding residues include C17, C20, and C51. Residues 49 to 52 (IGCS) and H68 contribute to the thiamine diphosphate site. D93 is a Mg(2+) binding site. A thiamine diphosphate-binding site is contributed by 94–95 (GD). Residues N121 and V123 each contribute to the Mg(2+) site. 125–126 (GL) is a thiamine diphosphate binding site. Residue C200 participates in [4Fe-4S] cluster binding.

Heterodimer composed of an alpha and a beta subunit. Requires [4Fe-4S] cluster as cofactor. It depends on thiamine diphosphate as a cofactor. Mg(2+) is required as a cofactor.

The catalysed reaction is a 2-oxocarboxylate + 2 oxidized [2Fe-2S]-[ferredoxin] + CoA = an acyl-CoA + 2 reduced [2Fe-2S]-[ferredoxin] + CO2 + H(+). Its function is as follows. Catalyzes the coenzyme A-dependent oxidative decarboxylation of different 2-oxoacids such as pyruvate, 2-oxobutyrate, glyoxylate and 2-oxoglutarate to form their CoA derivatives. This Aeropyrum pernix (strain ATCC 700893 / DSM 11879 / JCM 9820 / NBRC 100138 / K1) protein is 2-oxoacid:ferredoxin oxidoreductase 2, subunit beta.